The primary structure comprises 177 residues: Adenine phosphoribosyltransferase (177 aa).

The protein belongs to the purine/pyrimidine phosphoribosyltransferase family. As to quaternary structure, homodimer.

It localises to the cytoplasm. It carries out the reaction AMP + diphosphate = 5-phospho-alpha-D-ribose 1-diphosphate + adenine. It functions in the pathway purine metabolism; AMP biosynthesis via salvage pathway; AMP from adenine: step 1/1. Its function is as follows. Catalyzes a salvage reaction resulting in the formation of AMP, that is energically less costly than de novo synthesis. The sequence is that of Adenine phosphoribosyltransferase from Rhodococcus jostii (strain RHA1).